Consider the following 410-residue polypeptide: Probable nicotinate phosphoribosyltransferase (410 aa).

Nicotinate-binding residues include Tyr-15, Phe-170, and Thr-220. His-223 is subject to Phosphohistidine. Thr-348 contributes to the 5-phospho-alpha-D-ribose 1-diphosphate binding site.

Belongs to the NAPRTase family. Requires Mg(2+) as cofactor. The cofactor is Mn(2+). In terms of processing, transiently phosphorylated on a His residue during the reaction cycle. Phosphorylation strongly increases the affinity for substrates and increases the rate of nicotinate D-ribonucleotide production. Dephosphorylation regenerates the low-affinity form of the enzyme, leading to product release.

It carries out the reaction nicotinate + 5-phospho-alpha-D-ribose 1-diphosphate + ATP + H2O = nicotinate beta-D-ribonucleotide + ADP + phosphate + diphosphate. The protein operates within cofactor biosynthesis; NAD(+) biosynthesis; nicotinate D-ribonucleotide from nicotinate: step 1/1. Catalyzes the first step in the biosynthesis of NAD from nicotinic acid, the ATP-dependent synthesis of beta-nicotinate D-ribonucleotide from nicotinate and 5-phospho-D-ribose 1-phosphate. Helps prevent cellular oxidative stress via its role in NAD biosynthesis. In Schizosaccharomyces pombe (strain 972 / ATCC 24843) (Fission yeast), this protein is Probable nicotinate phosphoribosyltransferase.